A 349-amino-acid chain; its full sequence is PDZ and LIM domain protein 2 (349 aa).

The PDZ domain occupies 1–84; it reads MALTVDVAGP…PLRLQLDRSQ (84 aa). A disordered region spans residues 74–147; that stretch reads SPLRLQLDRS…TPPPTSPVAL (74 aa). Positions 81–94 are enriched in polar residues; that stretch reads DRSQTASPGQTNGE. 5 positions are modified to phosphoserine: S124, S127, S129, S134, and S137. Residues T138 and T142 each carry the phosphothreonine modification. A phosphoserine mark is found at S143 and S163. Residues 169–212 form a disordered region; sequence AHHLTYPGHPTSQQAGHSSPSDSAVRVLLHSPGRPSSPRFSSLD. A compositionally biased stretch (polar residues) spans 178-190; that stretch reads PTSQQAGHSSPSD. Phosphoserine occurs at positions 199, 204, 205, 209, 210, and 263. A compositionally biased stretch (low complexity) spans 199-210; the sequence is SPGRPSSPRFSS. In terms of domain architecture, LIM zinc-binding spans 281–341; sequence HTCEKCSVNI…EKHARQRYSM (61 aa).

Interacts with alpha-actinins ACTN1 and ACTN4, FLNA and MYH9. Interacts (via LIM zinc-binding domain) with MKRN2. Highly expressed in lung. Expressed at intermediate level in kidney, testis and spleen. Weakly expressed in heart and brain.

It is found in the cytoplasm. The protein resides in the cytoskeleton. Functionally, probable adapter protein located at the actin cytoskeleton that promotes cell attachment. Necessary for the migratory capacity of epithelial cells. Overexpression enhances cell adhesion to collagen and fibronectin and suppresses anchorage independent growth. May contribute to tumor cell migratory capacity. This is PDZ and LIM domain protein 2 (Pdlim2) from Mus musculus (Mouse).